The following is a 60-amino-acid chain: Large ribosomal subunit protein bL32 (60 aa).

Positions 1 to 21 (MAVPARHTSKAKKNKRRTHYK) are disordered. A compositionally biased stretch (basic residues) spans 7-20 (HTSKAKKNKRRTHY).

Belongs to the bacterial ribosomal protein bL32 family.

This chain is Large ribosomal subunit protein bL32, found in Streptococcus uberis (strain ATCC BAA-854 / 0140J).